The primary structure comprises 116 residues: Toxin ICK-10 (116 aa).

The N-terminal stretch at 1–19 (MMKLYSLVIIATLAAAAFA) is a signal peptide. 4 disulfide bridges follow: C56–C71, C64–C77, C68–C113, and C70–C84.

The protein belongs to the neurotoxin 25 family. ICK-8 subfamily. Expressed by the venom gland.

The protein localises to the secreted. Ion channel inhibitor. The sequence is that of Toxin ICK-10 from Trittame loki (Brush-footed trapdoor spider).